Reading from the N-terminus, the 171-residue chain is UPF0398 protein M6_Spy1399 (171 aa).

This sequence belongs to the UPF0398 family.

The polypeptide is UPF0398 protein M6_Spy1399 (Streptococcus pyogenes serotype M6 (strain ATCC BAA-946 / MGAS10394)).